Here is a 591-residue protein sequence, read N- to C-terminus: Probable translation initiation factor IF-2 (591 aa).

Positions Ile6–Met220 constitute a tr-type G domain. The interval Gly15–Thr22 is G1. Gly15–Thr22 contributes to the GTP binding site. The interval Ala40–His44 is G2. Residues Asp76 to Gly79 form a G3 region. Residues Asp76–His80 and Thr130–Asp133 contribute to the GTP site. The tract at residues Thr130–Asp133 is G4. Residues Ser198 to His200 form a G5 region.

The protein belongs to the TRAFAC class translation factor GTPase superfamily. Classic translation factor GTPase family. IF-2 subfamily.

Functionally, function in general translation initiation by promoting the binding of the formylmethionine-tRNA to ribosomes. Seems to function along with eIF-2. This is Probable translation initiation factor IF-2 from Methanoregula boonei (strain DSM 21154 / JCM 14090 / 6A8).